The following is a 602-amino-acid chain: UvrABC system protein C (602 aa).

In terms of domain architecture, GIY-YIG spans 17 to 94 (KTSGCYKMYS…IKKYKPTYNI (78 aa)). A UVR domain is found at 199–234 (SKLLNDIEIKMKEVIMKENFEAAIKLKETKKSLIEI).

The protein belongs to the UvrC family. As to quaternary structure, interacts with UvrB in an incision complex.

The protein resides in the cytoplasm. Functionally, the UvrABC repair system catalyzes the recognition and processing of DNA lesions. UvrC both incises the 5' and 3' sides of the lesion. The N-terminal half is responsible for the 3' incision and the C-terminal half is responsible for the 5' incision. In Borrelia duttonii (strain Ly), this protein is UvrABC system protein C.